Consider the following 664-residue polypeptide: Putative peroxisomal acyl-coenzyme A oxidase 1.2 (664 aa).

399–404 (CGGHGY) provides a ligand contact to FAD. The short motif at 662-664 (AKL) is the Microbody targeting signal element.

This sequence belongs to the acyl-CoA oxidase family. FAD is required as a cofactor.

It is found in the peroxisome. The enzyme catalyses a 2,3-saturated acyl-CoA + O2 = a (2E)-enoyl-CoA + H2O2. Functionally, catalyzes the desaturation of acyl-CoAs to 2-trans-enoyl-CoAs. This chain is Putative peroxisomal acyl-coenzyme A oxidase 1.2 (ACX1.2), found in Arabidopsis thaliana (Mouse-ear cress).